We begin with the raw amino-acid sequence, 1480 residues long: Heme-responsive zinc finger transcription factor HAP1 (1480 aa).

A compositionally biased stretch (polar residues) spans 1–50 (MSNTPYNSSVPSIASMTQSSVSRSPNMHTATTPGANTSSNSPPLHMSSDS). Residues 1–56 (MSNTPYNSSVPSIASMTQSSVSRSPNMHTATTPGANTSSNSPPLHMSSDSSKIKRK) form a disordered region. Cys-64, Cys-67, Cys-74, Cys-81, Cys-84, and Cys-93 together coordinate Zn(2+). The segment at residues 64–93 (CTICRKRKVKCDKLRPHCQQCTKTGVAHLC) is a DNA-binding region (zn(2)-C6 fungal-type). Residues 105 to 134 (EKELLKDNELKKLRERVKSLEKTLSKVHSS) are a coiled coil. A disordered region spans residues 126–208 (KTLSKVHSSP…ANSSSLSISN (83 aa)). Positions 130-142 (KVHSSPSSNSLKS) are enriched in low complexity. 2 stretches are compositionally biased toward polar residues: residues 143–152 (YNTPESSNLF) and 160–176 (TLVNANTGSASSASHMH). Positions 177 to 208 (QQQQQQQQQEQQQDFSRSANANANSSSLSISN) are enriched in low complexity. Residues 244-441 (KGDPYLKLLW…NTIPHHQPQS (198 aa)) are heme-responsive; required for HMC formation. HRM repeat units follow at residues 280–285 (KCPINH), 296–301 (KCPVDH), 320–325 (KCPVDH), 344–349 (RCPVDH), 386–391 (KCPVDH), and 412–417 (RCPIDH). Composition is skewed to polar residues over residues 429-444 (STHNTIPHHQPQSGSH) and 703-731 (QLNATIPATSQDVSNNGSKKANPSTNPTL). Disordered regions lie at residues 429 to 456 (STHNTIPHHQPQSGSHARSHPAQSRKHD) and 703 to 764 (QLNA…KENQ). Low complexity predominate over residues 732–756 (NNNMSAATTNSSSRSGSADSRSGSN). An HRM 7 repeat occupies 1189–1194 (KCPVYQ). Positions 1381–1408 (TANTDTSANGSALSTLTSPQGSDLASNS) are disordered. A compositionally biased stretch (polar residues) spans 1385–1408 (DTSANGSALSTLTSPQGSDLASNS).

As to quaternary structure, binds DNA as a homodimer. Interacts with SRO9 and YDJ1. In the absence of heme, binds to at least four cellular proteins, including YDJ1 and SRO9, forming a high-molecular-weight complex (HMC) which results in repression of its activity and dictates its DNA-binding specificity.

The protein resides in the nucleus. Its function is as follows. Regulation of oxygen dependent gene expression. It modulates the expression of Iso-1 (CYP1) and Iso-2 (CYP3) cytochrome c. In response to heme, promotes transcription of genes encoding functions required for respiration, controlling oxidative damage and repression of anaerobic genes. Binds to the sequence 5'-CGGNNNTNNCGG-3'. Is non-functional in terms of iso-1 cytochrome c expression in strain S288c and its derivatives. The chain is Heme-responsive zinc finger transcription factor HAP1 (HAP1) from Saccharomyces cerevisiae (strain Kyokai no. 7 / NBRC 101557) (Baker's yeast).